Reading from the N-terminus, the 126-residue chain is UPF0102 protein Cphamn1_0017 (126 aa).

The protein belongs to the UPF0102 family.

The protein is UPF0102 protein Cphamn1_0017 of Chlorobium phaeobacteroides (strain BS1).